Consider the following 713-residue polypeptide: Low-density lipoprotein receptor-related protein 10 (713 aa).

The N-terminal stretch at 1–16 (MLLATLLLLLLGGALA) is a signal peptide. Over 17–440 (HPDRIIFPNH…WDCSYVLPRK (424 aa)) the chain is Extracellular. Cystine bridges form between C28–C57 and C80–C98. The region spanning 28–136 (CEDPPAVLLE…QGFLLSYSQD (109 aa)) is the CUB 1 domain. N56 is a glycosylation site (N-linked (GlcNAc...) asparagine). N111 carries N-linked (GlcNAc...) asparagine glycosylation. Residues 139-175 (MCLQEEFQCLNHRCVSAVQRCDGVDACGDGSDEAGCS) form the LDL-receptor class A 1 domain. Disulfide bonds link C140–C152, C147–C165, C159–C174, and C192–C220. One can recognise a CUB 2 domain in the interval 192 to 305 (CNVTLEDFYG…RGFNATYHVR (114 aa)). N-linked (GlcNAc...) asparagine glycans are attached at residues N193 and N299. LDL-receptor class A domains follow at residues 307–354 (YCLP…EDCP), 355–397 (GCPP…RRCR), and 398–434 (HCQP…WDCS). 9 disulfides stabilise this stretch: C308-C331, C315-C344, C338-C353, C356-C374, C363-C387, C381-C396, C399-C411, C406-C424, and C418-C433. A helical membrane pass occupies residues 441 to 461 (VITAAVIGSLVCGLLLVIALG). The Cytoplasmic portion of the chain corresponds to 462 to 713 (CTCKLYAIRT…AEAEDEPLLT (252 aa)). Positions 564–637 (GLLPRTNTPA…SPAPTTVPEA (74 aa)) are disordered. Residues 569–584 (TNTPARASEARSQVTP) are compositionally biased toward polar residues. T596 bears the Phosphothreonine mark. Residues 621-636 (PLPSASTSPAPTTVPE) show a composition bias toward low complexity.

It belongs to the LDLR family. As to expression, expressed in blood leukocyte, lung, placenta, small intestine, liver, kidney, spleen, thymus, colon, skeletal muscle and heart.

It localises to the membrane. It is found in the coated pit. In terms of biological role, probable receptor, which is involved in the internalization of lipophilic molecules and/or signal transduction. May be involved in the uptake of lipoprotein APOE in liver. The chain is Low-density lipoprotein receptor-related protein 10 (LRP10) from Homo sapiens (Human).